We begin with the raw amino-acid sequence, 156 residues long: Bacterial ferritin (156 aa).

In terms of domain architecture, Ferritin-like diiron spans 1 to 146; the sequence is MKGKPAVLAQ…KQLGLIEKIG (146 aa). The Fe cation site is built by glutamate 18, glutamate 51, histidine 54, glutamate 94, glutamate 128, and histidine 131.

It belongs to the bacterioferritin family. The bacterioferritin (BFR) complex is formed of 24 subunits (BfrA and BfrB) of unknown stoichiometry. The BFR is arranged as 12 dimers that are packed together to form an approximately spherical molecule with a central cavity, in which large amounts of iron can be deposited.

It localises to the cytoplasm. The catalysed reaction is 4 Fe(2+) + O2 + 4 H(+) = 4 Fe(3+) + 2 H2O. It catalyses the reaction Fe(2+)(in) = Fe(2+)(out). Functionally, part of the iron-storage bacterioferritin (BFR) complex which stores about 50% of intracellular iron. Iron-storage protein, whose ferroxidase center binds Fe(2+), oxidizes it using dioxygen to Fe(3+), and participates in the subsequent Fe(3+) oxide mineral core formation within the central cavity of the BFR protein shell. BFR rapidly binds iron in labeling experiments in vivo during iron-limiting conditions. This is Bacterial ferritin from Synechocystis sp. (strain ATCC 27184 / PCC 6803 / Kazusa).